The primary structure comprises 602 residues: Elongation factor 4 (602 aa).

In terms of domain architecture, tr-type G spans 7 to 189 (SQIRNFSIIA…AIVHRIPPPA (183 aa)). Residues 19-24 (DHGKST) and 136-139 (NKID) each bind GTP.

This sequence belongs to the TRAFAC class translation factor GTPase superfamily. Classic translation factor GTPase family. LepA subfamily.

The protein localises to the cell inner membrane. The enzyme catalyses GTP + H2O = GDP + phosphate + H(+). Required for accurate and efficient protein synthesis under certain stress conditions. May act as a fidelity factor of the translation reaction, by catalyzing a one-codon backward translocation of tRNAs on improperly translocated ribosomes. Back-translocation proceeds from a post-translocation (POST) complex to a pre-translocation (PRE) complex, thus giving elongation factor G a second chance to translocate the tRNAs correctly. Binds to ribosomes in a GTP-dependent manner. The polypeptide is Elongation factor 4 (Gloeobacter violaceus (strain ATCC 29082 / PCC 7421)).